Reading from the N-terminus, the 380-residue chain is 1-deoxy-D-xylulose 5-phosphate reductoisomerase (380 aa).

Positions 10, 11, 12, 13, 36, 37, 38, and 120 each coordinate NADPH. K121 contributes to the 1-deoxy-D-xylulose 5-phosphate binding site. Residue E122 participates in NADPH binding. Mn(2+) is bound at residue D146. Positions 147, 148, 172, and 195 each coordinate 1-deoxy-D-xylulose 5-phosphate. E148 contacts Mn(2+). G201 lines the NADPH pocket. S208, N213, K214, and E217 together coordinate 1-deoxy-D-xylulose 5-phosphate. E217 is a binding site for Mn(2+).

Belongs to the DXR family. Mg(2+) serves as cofactor. The cofactor is Mn(2+).

It carries out the reaction 2-C-methyl-D-erythritol 4-phosphate + NADP(+) = 1-deoxy-D-xylulose 5-phosphate + NADPH + H(+). It participates in isoprenoid biosynthesis; isopentenyl diphosphate biosynthesis via DXP pathway; isopentenyl diphosphate from 1-deoxy-D-xylulose 5-phosphate: step 1/6. Catalyzes the NADPH-dependent rearrangement and reduction of 1-deoxy-D-xylulose-5-phosphate (DXP) to 2-C-methyl-D-erythritol 4-phosphate (MEP). This chain is 1-deoxy-D-xylulose 5-phosphate reductoisomerase, found in Listeria innocua serovar 6a (strain ATCC BAA-680 / CLIP 11262).